The following is a 479-amino-acid chain: Transcription factor CP2-like protein 1 (479 aa).

Positions 43 to 280 (RLPPLQYVLC…PSPSYNGSPN (238 aa)) constitute a Grh/CP2 DB domain. Disordered regions lie at residues 219–245 (KPKG…KEKY) and 271–301 (PSPS…LPVG). Positions 221 to 245 (KGADRKQKTDREKMEKRTAQEKEKY) are enriched in basic and acidic residues. The interval 261 to 365 (PDVAYQVNSA…IRLFNAIKGR (105 aa)) is SAM2-like domain. Over residues 271 to 281 (PSPSYNGSPNS) the composition is skewed to polar residues.

It belongs to the grh/CP2 family. CP2 subfamily. In terms of assembly, forms homohexamers via its SAM-like domain. Interacts with MTA1; which is indispensable for TFCP2l1-mediated self-renewal-promoting effect and endoderm-inhibiting action. In terms of tissue distribution, highly expressed in placental JEG-3 cells and very low levels of expression in non-steroidogenic cells. No expression was seen in adrenal NCI-H295A cells or in adrenal tissue.

It is found in the nucleus. In terms of biological role, transcription factor that facilitates establishment and maintenance of pluripotency in embryonic stem cells (ESCs). With KLF2, acts as the major effector of self-renewal that mediates induction of pluripotency downstream of LIF/STAT3 and Wnt/beta-catenin signaling. Required for normal duct development in the salivary gland and kidney. Coordinates the development of the kidney collecting ducts intercalated (IC) and principal (PC) cells, which regulate acid-base and salt-water homeostasis, respectively. Regulates the expression of IC genes including subunits B1 and D2 of the V-ATPase complex, OXGR1, CA12, SLC4A1, AQP6 and IC-specific transcription factor FOXI1. Also regulates the expression of JAG1 and subsequent notch signaling in the collecting duct. JAG1 initiates notch signaling in PCs but inhibits notch signaling in ICs. Acts as a transcriptional suppressor that may suppress UBP1-mediated transcriptional activation. Modulates the placental expression of CYP11A1. In Homo sapiens (Human), this protein is Transcription factor CP2-like protein 1 (TFCP2L1).